The chain runs to 768 residues: Probable LRR receptor-like serine/threonine-protein kinase At4g37250 (768 aa).

The signal sequence occupies residues 1-21; it reads MRMELISVIFFFFCSVLSSSA. The Extracellular segment spans residues 22–328; sequence LNSDGLVLMK…PNPRTGLRPG (307 aa). Asparagine 64 carries N-linked (GlcNAc...) asparagine glycosylation. 8 LRR repeats span residues 67 to 90, 91 to 112, 115 to 137, 139 to 162, 163 to 183, 184 to 206, 207 to 229, and 232 to 254; these read KVLT…GSLL, TLQS…SFFN, ELRF…IGDL, NLLT…ASLR, NLTV…GGWR, VVEF…FGGY, SLQY…IGVN, and RNVT…PVFL. Asparagine 99 carries an N-linked (GlcNAc...) asparagine glycan. N-linked (GlcNAc...) asparagine glycans are attached at residues asparagine 144, asparagine 163, asparagine 196, asparagine 212, asparagine 233, and asparagine 242. The tract at residues 301-324 is disordered; it reads PNTIGSNPVTDPNSQQTDPNPRTG. The segment covering 303 to 320 has biased composition (polar residues); it reads TIGSNPVTDPNSQQTDPN. The helical transmembrane segment at 329-349 threads the bilayer; sequence VIIGIVVGDIAGIGILAVIFL. Topologically, residues 350–768 are cytoplasmic; that stretch reads YIYRCKKNKI…IKSSSFHYGH (419 aa). The interval 361–432 is disordered; that stretch reads DNNNNDKQRT…NANQRSGDNK (72 aa). The span at 378 to 387 shows a compositional bias: low complexity; sequence STFSSSSSSP. A compositionally biased stretch (acidic residues) spans 407–420; it reads PSEEEDEDDEDEES. The Protein kinase domain occupies 449-756; that stretch reads KASAYILGAT…AVLERFHPNS (308 aa). Residues serine 451 and serine 531 each carry the phosphoserine modification. Threonine 553 is subject to Phosphothreonine. Serine 662 is subject to Phosphoserine.

Belongs to the protein kinase superfamily. Ser/Thr protein kinase family.

It is found in the membrane. The catalysed reaction is L-seryl-[protein] + ATP = O-phospho-L-seryl-[protein] + ADP + H(+). The enzyme catalyses L-threonyl-[protein] + ATP = O-phospho-L-threonyl-[protein] + ADP + H(+). The polypeptide is Probable LRR receptor-like serine/threonine-protein kinase At4g37250 (Arabidopsis thaliana (Mouse-ear cress)).